Reading from the N-terminus, the 551-residue chain is MTLRAMTDVGAELGLSPEDVLPWGTHRAKVSLDALGKRGGRQGRLVLVSAINPTPPGEGKTTMSVALAMGLRKRGRRAVAALREPSLGPVFGVKGGGTGGGQASLEPAADINLHFTGDLHAITSANNLLSALVDNAVFYGQPVALDATRVRWRRALDMNDRFLRNVIVGLGGKAQGVPREDHFDITAASEVMAILALAEGLKDLEARLGRVIIGHTRDGQPVRARDVDAAASMVALLKDALMPNLAQTREGGPALVHAGPFANIAHGCSSVMGTRMGLAYADEVITEAGFGFDLGAEKFLDIKCRGSGLWPRGVVLVVTLRALKHHGGASPARVAEPDREALVRGFAHLEKHLESVAAFGLPAVLCVNRFPQDTESELEELRAFGKARGVETAVCDGFSRGGDGSLELADCVLEMLDGTDAAPPQPRFLYDVAQTPEEKVAAIARTVYGADDVAFTASAKKDLDAIRELGGAGLPVCMAKTHLSLSDDPTKLGRPRGFTLTVREVRLSAGAGFMVALTGEILTMPGLPREPAARRVTVHDDGRVTGLMQGE.

Residue T54–T61 participates in ATP binding.

This sequence belongs to the formate--tetrahydrofolate ligase family.

It carries out the reaction (6S)-5,6,7,8-tetrahydrofolate + formate + ATP = (6R)-10-formyltetrahydrofolate + ADP + phosphate. It functions in the pathway one-carbon metabolism; tetrahydrofolate interconversion. The protein is Formate--tetrahydrofolate ligase of Myxococcus xanthus (strain DK1622).